The sequence spans 425 residues: Probable mitochondrial import inner membrane translocase subunit tin-44 (425 aa).

Residues 38–149 (FLNNLIDNVR…EHVEKVAEKV (112 aa)) are a coiled coil.

Belongs to the Tim44 family. In terms of assembly, probable component of the PAM complex at least composed of a mitochondrial HSP70 protein, GrpE, tin-44, tim-16 and tim-14/dnj-21. The complex interacts with the tim-23 component of the TIM23 complex.

The protein resides in the mitochondrion inner membrane. Its function is as follows. Essential component of the PAM complex, a complex required for the translocation of transit peptide-containing proteins from the inner membrane into the mitochondrial matrix in an ATP-dependent manner. Recruits mitochondrial HSP70 to drive protein translocation into the matrix using ATP as an energy source. This Caenorhabditis elegans protein is Probable mitochondrial import inner membrane translocase subunit tin-44.